Here is a 3391-residue protein sequence, read N- to C-terminus: Genome polyprotein (3391 aa).

The segment at 1 to 15 is interaction with host EXOC1; it reads MNNQRKKAKNTPFNM. Over 1 to 101 the chain is Cytoplasmic; sequence MNNQRKKAKN…LNILNRRRRS (101 aa). A hydrophobic; homodimerization of capsid protein C region spans residues 37 to 72; the sequence is MLQGRGPLKLFMALVAFLRFLTIPPTAGILKRWGTI. The propeptide at 101 to 114 is ER anchor for the capsid protein C, removed in mature form by serine protease NS3; sequence SAGMIIMLIPTVMA. The helical transmembrane segment at 102–122 threads the bilayer; it reads AGMIIMLIPTVMAFHLTTRNG. Topologically, residues 123 to 238 are extracellular; that stretch reads EPHMIVSRQE…GAWKHAQRIE (116 aa). N-linked (GlcNAc...) asparagine; by host glycosylation occurs at N183. A helical membrane pass occupies residues 239-259; it reads TWILRHPGFTIMAAILAYTIG. Residues 260–265 lie on the Cytoplasmic side of the membrane; it reads TTHFQR. A helical membrane pass occupies residues 266–280; it reads ALIFILLTAVAPSMT. Topologically, residues 281-725 are extracellular; it reads MRCIGISNRD…LHQVFGAIYG (445 aa). 4 disulfides stabilise this stretch: C283-C310, C340-C401, C354-C385, and C372-C396. N347 is a glycosylation site (N-linked (GlcNAc...) asparagine; by host). Positions 378 to 391 are fusion peptide; that stretch reads DRGWGNGCGLFGKG. Residue N433 is glycosylated (N-linked (GlcNAc...) asparagine; by host). Cystine bridges form between C465–C565 and C582–C613. The helical transmembrane segment at 726–746 threads the bilayer; the sequence is AAFSGVSWTMKILIGVIITWI. Residues 747-752 lie on the Cytoplasmic side of the membrane; that stretch reads GMNSRS. The helical transmembrane segment at 753–773 threads the bilayer; it reads TSLSVSLVLVGIVTLYLGVMV. Residues 774 to 1195 are Extracellular-facing; that stretch reads QADSGCVVSW…MVGATMTDDI (422 aa). Intrachain disulfides connect C779/C790, C830/C918, C954/C998, C1055/C1104, C1066/C1088, and C1087/C1091. N905 and N982 each carry an N-linked (GlcNAc...) asparagine; by host glycan. N1134 is a glycosylation site (N-linked (GlcNAc...) asparagine; by host). The chain crosses the membrane as a helical span at residues 1196 to 1220; that stretch reads GMGVTYLALLAAFKVRPTFAAGLLL. Over 1221 to 1226 the chain is Cytoplasmic; it reads RKLTSK. The helical transmembrane segment at 1227 to 1245 threads the bilayer; sequence ELMMTTIGIVLLSQSTIPE. The Lumenal segment spans residues 1246–1269; that stretch reads TILELTDALALGMMVLKMVRNMEK. The chain crosses the membrane as a helical span at residues 1270 to 1290; that stretch reads YQLAVTIMAILCVPNAVILQN. Position 1291 (A1291) is a topological domain, cytoplasmic. The chain crosses the membrane as a helical span at residues 1292-1310; the sequence is WKVSCTILAVVSVSPLLLT. The Lumenal segment spans residues 1311–1317; it reads SSQQKTD. A helical membrane pass occupies residues 1318–1338; that stretch reads WIPLALTIKGLNPTAIFLTTL. Residues 1339–1346 are Cytoplasmic-facing; it reads SRTSKKRS. Residues 1347–1367 form a helical membrane-spanning segment; it reads WPLNEAIMAVGMVSILASSLL. Over 1368-1370 the chain is Lumenal; it reads KND. The helical transmembrane segment at 1371-1391 threads the bilayer; sequence IPMTGPLVAGGLLTVCYVLTG. The Cytoplasmic segment spans residues 1392–1447; it reads RSADLELERAADVKWEDQAEISGSSPILSITISEDGSMSIKNEEEEQTLTILIRTG. The tract at residues 1398-1437 is interacts with and activates NS3 protease; the sequence is LERAADVKWEDQAEISGSSPILSITISEDGSMSIKNEEEE. The segment at residues 1448–1468 is an intramembrane region (helical); the sequence is LLVISGLFPVSIPITAAAWYL. Residues 1469–2147 lie on the Cytoplasmic side of the membrane; sequence WEVKKQRAGV…LSELPETLET (679 aa). Positions 1476-1653 constitute a Peptidase S7 domain; it reads AGVLWDVPSP…EKSIEDNPEI (178 aa). Catalysis depends on charge relay system; for serine protease NS3 activity residues H1526, D1550, and S1610. The Helicase ATP-binding domain maps to 1655 to 1811; sequence DDIFRKRRLT…QSNAPIIDEE (157 aa). Residues 1659-1662 are important for RNA-binding; the sequence is RKRR. 1668 to 1675 lines the ATP pocket; it reads LHPGAGKT. The short motif at 1759-1762 is the DEAH box element; the sequence is DEAH. Residues 1821–1988 enclose the Helicase C-terminal domain; sequence SGHEWVTDFK…IIPSMFEPER (168 aa). K1863 carries the post-translational modification N6-acetyllysine; by host. Residues 2148–2168 traverse the membrane as a helical segment; that stretch reads LLLLTLLATVTGGIFLFLMSG. At 2169–2170 the chain is on the lumenal side; sequence RG. Residues 2171–2191 constitute an intramembrane region (helical); sequence IGKMTLGMCCIITASVLLWYA. Q2192 is a topological domain (lumenal). A helical transmembrane segment spans residues 2193–2213; that stretch reads IQPHWIAASIILEFFLIVLLI. The Cytoplasmic segment spans residues 2214-2228; the sequence is PEPEKQRTPQDNQLT. The chain crosses the membrane as a helical span at residues 2229 to 2249; that stretch reads YVVIAILTVVAATMANEMGFL. The Lumenal segment spans residues 2250-2274; sequence EKTKKDLGLGSIATQQPESNILDID. The segment at residues 2275–2295 is an intramembrane region (helical); it reads LRPASAWTLYAVATTFVTPML. Topologically, residues 2296–2316 are lumenal; the sequence is RHSIENSSVNVSLTAIANQAT. Residues N2301 and N2305 are each glycosylated (N-linked (GlcNAc...) asparagine; by host). Positions 2317 to 2337 form an intramembrane region, helical; that stretch reads VLMGLGKGWPLSKMDIGVPLL. Over 2338-2347 the chain is Lumenal; it reads AIGCYSQVNP. Residues 2348–2368 form a helical membrane-spanning segment; the sequence is ITLTAALLLLVAHYAIIGPGL. Topologically, residues 2369 to 2413 are cytoplasmic; the sequence is QAKATREAQKRAAAGIMKNPTVDGITVIDLDPIPYDPKFEKQLGQ. Residues 2414 to 2434 traverse the membrane as a helical segment; it reads VMLLVLCVTQVLMMRTTWALC. Topologically, residues 2435–2459 are lumenal; the sequence is EALTLATGPISTLWEGNPGRFWNTT. N-linked (GlcNAc...) asparagine; by host glycosylation is present at N2457. A helical membrane pass occupies residues 2460–2480; sequence IAVSMANIFRGSYLAGAGLLF. Topologically, residues 2481 to 3391 are cytoplasmic; it reads SIMKNTTNTR…REEEEAGVLW (911 aa). The 263-residue stretch at 2493–2755 folds into the mRNA cap 0-1 NS5-type MT domain; the sequence is TGNIGETLGE…DVDLGSGTRN (263 aa). S2547 contributes to the S-adenosyl-L-methionine binding site. S2547 is subject to Phosphoserine. Catalysis depends on K2552, which acts as the For 2'-O-MTase activity. An SUMO-interacting motif motif is present at residues 2568–2571; it reads VVDL. S-adenosyl-L-methionine-binding residues include G2577, W2578, T2595, K2596, D2622, and V2623. Residue D2637 is the For 2'-O-MTase activity of the active site. Residue I2638 coordinates S-adenosyl-L-methionine. Residues K2672 and E2708 each act as for 2'-O-MTase activity in the active site. Residue Y2710 coordinates S-adenosyl-L-methionine. Positions 2929, 2933, 2938, and 2941 each coordinate Zn(2+). One can recognise a RdRp catalytic domain in the interval 3020–3169; it reads AMYADDTAGW…PLDDRFASAL (150 aa). The Zn(2+) site is built by H3203, C3219, and C3338.

This sequence in the N-terminal section; belongs to the class I-like SAM-binding methyltransferase superfamily. mRNA cap 0-1 NS5-type methyltransferase family. Homodimer. Interacts (via N-terminus) with host EXOC1 (via C-terminus); this interaction results in EXOC1 degradation through the proteasome degradation pathway. In terms of assembly, forms heterodimers with envelope protein E in the endoplasmic reticulum and Golgi. As to quaternary structure, homodimer; in the endoplasmic reticulum and Golgi. Interacts with protein prM. Interacts with non-structural protein 1. Homodimer; Homohexamer when secreted. Interacts with envelope protein E. Interacts with host PRKAA1. In terms of assembly, interacts (via N-terminus) with serine protease NS3. As to quaternary structure, forms a heterodimer with serine protease NS3. May form homooligomers. Forms a heterodimer with NS2B. Interacts with NS4B. Interacts with unphosphorylated RNA-directed RNA polymerase NS5; this interaction stimulates RNA-directed RNA polymerase NS5 guanylyltransferase activity. Interacts with host SHFL. In terms of assembly, interacts with host MAVS; this interaction inhibits the synthesis of IFN-beta. Interacts with host SHFL. Interacts with host AUP1; the interaction occurs in the presence of Dengue virus NS4B and induces lipophagy which facilitates production of virus progeny particles. May interact with host SRPRA and SEC61G. As to quaternary structure, interacts with serine protease NS3. Homodimer. Interacts with host STAT2; this interaction inhibits the phosphorylation of the latter, and, when all viral proteins are present (polyprotein), targets STAT2 for degradation. Interacts with serine protease NS3. Interacts with host PAF1 complex; the interaction may prevent the recruitment of the PAF1 complex to interferon-responsive genes, and thus reduces the immune response. In terms of processing, specific enzymatic cleavages in vivo yield mature proteins. Cleavages in the lumen of endoplasmic reticulum are performed by host signal peptidase, whereas cleavages in the cytoplasmic side are performed by serine protease NS3. Signal cleavage at the 2K-4B site requires a prior NS3 protease-mediated cleavage at the 4A-2K site. Post-translationally, cleaved in post-Golgi vesicles by a host furin, releasing the mature small envelope protein M, and peptide pr. This cleavage is incomplete as up to 30% of viral particles still carry uncleaved prM. N-glycosylated. In terms of processing, N-glycosylated. The excreted form is glycosylated and this is required for efficient secretion of the protein from infected cells. Post-translationally, acetylated by host KAT5. Acetylation modulates NS3 RNA-binding and unwinding activities and plays an important positive role for viral replication. Phosphorylated on serines residues. This phosphorylation may trigger NS5 nuclear localization. In terms of processing, sumoylation of RNA-directed RNA polymerase NS5 increases NS5 protein stability allowing proper viral RNA replication.

The protein resides in the virion. Its subcellular location is the host nucleus. The protein localises to the host cytoplasm. It localises to the host perinuclear region. It is found in the secreted. The protein resides in the virion membrane. Its subcellular location is the host endoplasmic reticulum membrane. The protein localises to the host mitochondrion. It catalyses the reaction Selective hydrolysis of -Xaa-Xaa-|-Yaa- bonds in which each of the Xaa can be either Arg or Lys and Yaa can be either Ser or Ala.. The catalysed reaction is RNA(n) + a ribonucleoside 5'-triphosphate = RNA(n+1) + diphosphate. The enzyme catalyses a ribonucleoside 5'-triphosphate + H2O = a ribonucleoside 5'-diphosphate + phosphate + H(+). It carries out the reaction ATP + H2O = ADP + phosphate + H(+). It catalyses the reaction a 5'-end (5'-triphosphoguanosine)-ribonucleoside in mRNA + S-adenosyl-L-methionine = a 5'-end (N(7)-methyl 5'-triphosphoguanosine)-ribonucleoside in mRNA + S-adenosyl-L-homocysteine. The catalysed reaction is a 5'-end (N(7)-methyl 5'-triphosphoguanosine)-ribonucleoside in mRNA + S-adenosyl-L-methionine = a 5'-end (N(7)-methyl 5'-triphosphoguanosine)-(2'-O-methyl-ribonucleoside) in mRNA + S-adenosyl-L-homocysteine + H(+). Plays a role in virus budding by binding to the cell membrane and gathering the viral RNA into a nucleocapsid that forms the core of a mature virus particle. During virus entry, may induce genome penetration into the host cytoplasm after hemifusion induced by the surface proteins. Can migrate to the cell nucleus where it modulates host functions. Overcomes the anti-viral effects of host EXOC1 by sequestering and degrading the latter through the proteasome degradation pathway. Functionally, inhibits RNA silencing by interfering with host Dicer. Its function is as follows. Prevents premature fusion activity of envelope proteins in trans-Golgi by binding to envelope protein E at pH6.0. After virion release in extracellular space, gets dissociated from E dimers. In terms of biological role, acts as a chaperone for envelope protein E during intracellular virion assembly by masking and inactivating envelope protein E fusion peptide. prM is the only viral peptide matured by host furin in the trans-Golgi network probably to avoid catastrophic activation of the viral fusion activity in acidic Golgi compartment prior to virion release. prM-E cleavage is inefficient, and many virions are only partially matured. These uncleaved prM would play a role in immune evasion. May play a role in virus budding. Exerts cytotoxic effects by activating a mitochondrial apoptotic pathway through M ectodomain. May display a viroporin activity. Functionally, binds to host cell surface receptor and mediates fusion between viral and cellular membranes. Envelope protein is synthesized in the endoplasmic reticulum in the form of heterodimer with protein prM. They play a role in virion budding in the ER, and the newly formed immature particle is covered with 60 spikes composed of heterodimer between precursor prM and envelope protein E. The virion is transported to the Golgi apparatus where the low pH causes dissociation of PrM-E heterodimers and formation of E homodimers. prM-E cleavage is inefficient, and many virions are only partially matured. These uncleaved prM would play a role in immune evasion. Its function is as follows. Involved in immune evasion, pathogenesis and viral replication. Once cleaved off the polyprotein, is targeted to three destinations: the viral replication cycle, the plasma membrane and the extracellular compartment. Essential for viral replication. Required for formation of the replication complex and recruitment of other non-structural proteins to the ER-derived membrane structures. Excreted as a hexameric lipoparticle that plays a role against host immune response. Antagonizing the complement function. Binds to the host macrophages and dendritic cells. Inhibits signal transduction originating from Toll-like receptor 3 (TLR3). Mediates complement activation, which may contribute to the pathogenesis of the vascular leakage that occurs in severe dengue disease. Activates autophagy through the AMPK/ERK/mTOR signaling pathway. Mechanistically, acts as the assembly platform for STK11-AMPK interactions and promotes STK11-AMPK interactions. In turn, promotes phosphorylation of the AMPK kinase structural domain and activates AMPK, thereby positively regulating the AMPK/ERK/mTOR signaling pathway and inducing autophagy. In terms of biological role, disrupts the host endothelial glycocalyx layer of host pulmonary microvascular endothelial cells, inducing degradation of sialic acid and shedding of heparan sulfate proteoglycans. NS1 induces expression of sialidases, heparanase, and activates cathepsin L, which activates heparanase via enzymatic cleavage. These effects are probably linked to the endothelial hyperpermeability observed in severe dengue disease. Component of the viral RNA replication complex that functions in virion assembly and antagonizes the host immune response. Functionally, required cofactor for the serine protease function of NS3. May have membrane-destabilizing activity and form viroporins. Its function is as follows. Displays three enzymatic activities: serine protease, NTPase and RNA helicase. NS3 serine protease, in association with NS2B, performs its autocleavage and cleaves the polyprotein at dibasic sites in the cytoplasm: C-prM, NS2A-NS2B, NS2B-NS3, NS3-NS4A, NS4A-2K and NS4B-NS5. NS3 RNA helicase binds RNA and unwinds dsRNA in the 3' to 5' direction. In terms of biological role, regulates the ATPase activity of the NS3 helicase activity. NS4A allows NS3 helicase to conserve energy during unwinding. Plays a role in the inhibition of the host innate immune response. Interacts with host MAVS and thereby prevents the interaction between RIGI and MAVS. In turn, IFN-beta production is impaired. Interacts with host AUP1 which mediates induction of lipophagy in host cells and facilitates production of virus progeny particles. Functions as a signal peptide for NS4B and is required for the interferon antagonism activity of the latter. Functionally, induces the formation of ER-derived membrane vesicles where the viral replication takes place. Inhibits interferon (IFN)-induced host STAT1 phosphorylation and nuclear translocation, thereby preventing the establishment of cellular antiviral state by blocking the IFN-alpha/beta pathway. Its function is as follows. Replicates the viral (+) and (-) RNA genome, and performs the capping of genomes in the cytoplasm. NS5 methylates viral RNA cap at guanine N-7 and ribose 2'-O positions. Besides its role in RNA genome replication, also prevents the establishment of cellular antiviral state by blocking the interferon-alpha/beta (IFN-alpha/beta) signaling pathway. Inhibits host TYK2 and STAT2 phosphorylation, thereby preventing activation of JAK-STAT signaling pathway. May reduce immune responses by preventing the recruitment of the host PAF1 complex to interferon-responsive genes. This Aedimorphus (Red guenon) protein is Genome polyprotein.